The chain runs to 328 residues: Alpha-tubulin N-acetyltransferase 2 (328 aa).

Residues 5–185 (SQVALLPKLS…NNFVVFHRYF (181 aa)) form the N-acetyltransferase domain. Acetyl-CoA-binding positions include 119–132 (FFVDTSFQRKGFGK) and 155–164 (SVKFLAFLRK). 2 disordered regions span residues 219–261 (EYQS…PGKK) and 282–328 (GGDP…TPEH). Residues 238-248 (TPPPPLPPPLV) are compositionally biased toward pro residues. The segment covering 312–328 (PTRSGVQYNIISGTPEH) has biased composition (polar residues).

Belongs to the acetyltransferase ATAT1 family.

The catalysed reaction is L-lysyl-[alpha-tubulin] + acetyl-CoA = N(6)-acetyl-L-lysyl-[alpha-tubulin] + CoA + H(+). Specifically acetylates 'Lys-40' in alpha-tubulin on the lumenal side of microtubules. Promotes microtubule destabilization and accelerates microtubule dynamics; this activity may be independent of acetylation activity. Acetylates alpha-tubulin with a slow enzymatic rate, due to a catalytic site that is not optimized for acetyl transfer. Enters the microtubule through each end and diffuses quickly throughout the lumen of microtubules. Acetylates only long/old microtubules because of its slow acetylation rate since it does not have time to act on dynamically unstable microtubules before the enzyme is released. This is Alpha-tubulin N-acetyltransferase 2 from Trypanosoma cruzi (strain CL Brener).